A 341-amino-acid chain; its full sequence is Adhesion protein Bd37 (341 aa).

The first 21 residues, Met1 to Gly21, serve as a signal peptide directing secretion. N-linked (GlcNAc...) asparagine glycans are attached at residues Asn23 and Asn30. Cys26 and Cys307 are joined by a disulfide. A disordered region spans residues Ala36–Glu75. Residues Ala49–Ala59 are compositionally biased toward low complexity. Over residues Asn60–Glu75 the composition is skewed to polar residues. Ser311 carries the GPI-anchor amidated serine lipid modification. The propeptide at Gly312–Phe341 is removed in mature form.

In terms of processing, the signal sequence is cleaved. Glycosylated. Post-translationally, palmitoylated. In terms of processing, not myristoylated.

It localises to the cell membrane. The protein localises to the secreted. It is found in the vesicle. Binds to host erythrocytes. In Babesia divergens, this protein is Adhesion protein Bd37.